Reading from the N-terminus, the 435-residue chain is Plant UBX domain-containing protein 6 (435 aa).

Disordered stretches follow at residues 1-150 (MDVN…PQKV), 208-265 (ENYT…EDQP), and 311-352 (PTTT…SMSS). Residues 49 to 62 (TSSFSTFDGSSGYS) are compositionally biased toward low complexity. The span at 112-129 (AVEHYGGEENRAIERPEQ) shows a compositional bias: basic and acidic residues. Residues 130-141 (SSRSMSEETVSS) show a composition bias toward low complexity. Residues 150–211 (VFTHTVTSWS…IISREEENYT (62 aa)) form the SEP 1 domain. The segment covering 211 to 222 (TESQAGSDSAST) has biased composition (polar residues). The segment covering 231 to 242 (RAKESAIERSEQ) has biased composition (basic and acidic residues). The segment covering 252 to 265 (DSAELQEQQQEDQP) has biased composition (acidic residues). One can recognise an SEP 2 domain in the interval 268–343 (VVTYTVTIWR…ESTSTEPPLT (76 aa)). 2 stretches are compositionally biased toward low complexity: residues 312–323 (TTTRSTSCSSQT) and 333–349 (SEST…QPPS). One can recognise a UBX domain in the interval 357–434 (PAAPTTSIQL…GIANSVLVQK (78 aa)).

The protein is Plant UBX domain-containing protein 6 of Arabidopsis thaliana (Mouse-ear cress).